We begin with the raw amino-acid sequence, 595 residues long: Sucrose transport protein SUT4 (595 aa).

The Cytoplasmic segment spans residues 1–61; the sequence is MDSAAGGGGL…PAARTTTTRK (61 aa). Positions 29 to 55 are disordered; sequence SLNGGTPRGGSPKDPDATHQQGPPAAR. A helical membrane pass occupies residues 62-82; sequence LVLACMVAAGVQFGWALQLSL. The Extracellular segment spans residues 83-97; the sequence is LTPYIQTLGIDHAMA. Residues 98-118 form a helical membrane-spanning segment; it reads SFIWLCGPITGFVVQPCVGVW. The Cytoplasmic segment spans residues 119–130; it reads SDKCRSKYGRRR. Residues 131 to 151 form a helical membrane-spanning segment; sequence PFILAGCLMICFAVTLIGFSA. At 152-173 the chain is on the extracellular side; the sequence is DLGYILGDTTEHCSTYKGSRFR. The helical transmembrane segment at 174 to 194 threads the bilayer; sequence AAIIFVLGFWMLDLANNTVQG. Residues 195–213 lie on the Cytoplasmic side of the membrane; sequence PARALLADLSGPDQCNSAN. A helical membrane pass occupies residues 214-234; the sequence is AIFCTWMAVGNVLGFSSGASG. Residues 235–256 lie on the Extracellular side of the membrane; that stretch reads NWHKWFPFLMTRACCEACSNLK. Residues 257-277 traverse the membrane as a helical segment; sequence AAFLVAVVFLLFCMSVTLYFA. Topologically, residues 278–365 are cytoplasmic; sequence EEIPLEPTDA…LTSMRHLPPG (88 aa). Residues 291-340 are disordered; that stretch reads SDSAPLLNGSRDDNNASNEPRNGALPNGHTDGSNVPANSNAEDSNSNREN. Positions 320 to 334 are enriched in polar residues; sequence TDGSNVPANSNAEDS. The helical transmembrane segment at 366 to 386 threads the bilayer; that stretch reads MYSVLLVMALTWLSWFPFFLF. Residues 387–417 lie on the Extracellular side of the membrane; that stretch reads DTDWMGREVYHGDPNGNLSERKAYDNGVREG. Asn403 carries an N-linked (GlcNAc...) asparagine glycan. Residues 418 to 438 traverse the membrane as a helical segment; sequence AFGLLLNSVVLGIGSFLVDPL. Residues 439-447 are Cytoplasmic-facing; sequence CRLMGARLV. The chain crosses the membrane as a helical span at residues 448 to 468; it reads WAISNFTVFICMLATAILSWI. The Extracellular segment spans residues 469–491; it reads SFDLYSSKLHHIIGANKTVKNSA. N-linked (GlcNAc...) asparagine glycosylation occurs at Asn484. The helical transmembrane segment at 492–512 threads the bilayer; it reads LIVFSLLGLPLSITYSVPFSV. The Cytoplasmic portion of the chain corresponds to 513–525; it reads TAELTAGTGGGQG. The helical transmembrane segment at 526–546 threads the bilayer; that stretch reads LATGVLNLAIVVPQIVVSLGA. Residues 547-556 are Extracellular-facing; it reads GPWDALFGGG. Residues 557–577 traverse the membrane as a helical segment; the sequence is NVPAFALASVFSLGAGVLAVL. Residues 578–595 lie on the Cytoplasmic side of the membrane; it reads KLPKLPNSYRSAGFHGFG.

Belongs to the glycoside-pentoside-hexuronide (GPH) cation symporter transporter (TC 2.A.2.4) family. Homodimer.

The protein localises to the cell membrane. The protein operates within glycan biosynthesis; sucrose metabolism. In terms of biological role, responsible for the transport of sucrose into the cell, with the concomitant uptake of protons (symport system). May also transport other glucosides. The polypeptide is Sucrose transport protein SUT4 (SUT4) (Oryza sativa subsp. indica (Rice)).